The primary structure comprises 143 residues: 18.1 kDa class I heat shock protein (143 aa).

A sHSP domain is found at 29 to 143 (ENSAFVSTRI…PEVKSIEISS (115 aa)).

The protein belongs to the small heat shock protein (HSP20) family. Forms oligomeric structures.

Its subcellular location is the cytoplasm. In Medicago sativa (Alfalfa), this protein is 18.1 kDa class I heat shock protein (HSP18.1).